The following is a 306-amino-acid chain: D-alanine--D-alanine ligase (306 aa).

An ATP-grasp domain is found at 101–303 (KQVWQGIGLT…FSQLVVKILE (203 aa)). Position 134–189 (134–189 (VADLGLPLIVKPSLEGSSVGMTKVNEISELRGALEAAFRYDVDLLVEKWLHGPEYT)) interacts with ATP. Mg(2+)-binding residues include aspartate 257, glutamate 270, and asparagine 272.

It belongs to the D-alanine--D-alanine ligase family. The cofactor is Mg(2+). It depends on Mn(2+) as a cofactor.

Its subcellular location is the cytoplasm. It carries out the reaction 2 D-alanine + ATP = D-alanyl-D-alanine + ADP + phosphate + H(+). The protein operates within cell wall biogenesis; peptidoglycan biosynthesis. In terms of biological role, cell wall formation. The protein is D-alanine--D-alanine ligase of Photorhabdus laumondii subsp. laumondii (strain DSM 15139 / CIP 105565 / TT01) (Photorhabdus luminescens subsp. laumondii).